We begin with the raw amino-acid sequence, 382 residues long: Secreted RxLR effector protein 118 (382 aa).

A signal peptide spans 1-21 (MRGAYYVTIALLVVASSQISA). Residues 48–65 (RSLRGSRDVSNDVAIEER) carry the RxLR-dEER motif. The disordered stretch occupies residues 308–382 (MNKASTSKGK…AVTSLSSISN (75 aa)). Positions 310-323 (KASTSKGKSSVFTR) are enriched in polar residues.

This sequence belongs to the RxLR effector family.

The protein localises to the secreted. It localises to the host nucleus. Functionally, secreted effector that completely suppresses the host cell death induced by cell death-inducing proteins. This Plasmopara viticola (Downy mildew of grapevine) protein is Secreted RxLR effector protein 118.